A 782-amino-acid chain; its full sequence is Phosphate transporter PHO1 (782 aa).

At 1–386 (MVKFSKELEA…HQTKDSHMVT (386 aa)) the chain is on the cytoplasmic side. Residues 2–334 (VKFSKELEAQ…GQNASSTYLK (333 aa)) form the SPX domain. The disordered stretch occupies residues 165 to 202 (KKRNLSGSNSHRSFSSSVRNSDFSAGSPGELSEIQSET). The segment covering 170-188 (SGSNSHRSFSSSVRNSDFS) has biased composition (low complexity). The segment at 315–322 (KIMKKFDK) is important for inositol polyphosphate binding. Residues 387–407 (FFVGLFTGCFISLFVIYIILA) traverse the membrane as a helical segment. At 408–423 (HLSGIFTSSDQVSYLE) the chain is on the lumenal side. The helical transmembrane segment at 424 to 444 (TVYPVFSVFALLSLHMFMYGC) threads the bilayer. The Cytoplasmic segment spans residues 445 to 473 (NLYMWKNTRINYTFIFEFAPNTALRYRDA). The helical transmembrane segment at 474 to 494 (FLMGTTFMTSVVAAMVIHLIL) threads the bilayer. The Lumenal portion of the chain corresponds to 495 to 506 (RASGFSASQVDT). A helical transmembrane segment spans residues 507–527 (IPGILLLIFICVLICPFNTFY). At 528 to 593 (RPTRFCFIRI…THEYNTCKNG (66 aa)) the chain is on the cytoplasmic side. The region spanning 591–782 (KNGRYYREFA…LPFLDRDSDG (192 aa)) is the EXS domain. A helical transmembrane segment spans residues 594 to 614 (RYYREFAYLISFLPYFWRAMQ). The Lumenal portion of the chain corresponds to 615-619 (CVRRW). A helical membrane pass occupies residues 620-639 (WDESNPDHLINMGKYVSAMV). Residues 640 to 782 (AAGVRITYAR…LPFLDRDSDG (143 aa)) are Cytoplasmic-facing.

This sequence belongs to the SYG1 (TC 2.A.94) family. In terms of assembly, interacts with PHO2. PHO1 degradation is PHO2 dependent and involves multivesicular body-mediated vacuolar proteolysis. In terms of tissue distribution, predominantly in roots, but also weak expression in the lower part of the hypocotyl. In the stellar cells, including the pericycle and xylem parenchyma cells, but not in the cortical or epidermal cells. Expressed in guard cells.

It localises to the golgi apparatus membrane. The protein resides in the golgi apparatus. The protein localises to the trans-Golgi network membrane. Its subcellular location is the endoplasmic reticulum membrane. Its function is as follows. Inositol polyphosphate sensor that associates with transcription factors to regulate inorganic phosphate (Pi) starvation responses. Probably acts by binding inositol polyphosphate via its SPX domain. Acts as a Pi exporter, mediating efflux of Pi out of cells. Transfers Pi from the epidermal and cortical cells to the root xylem vessels. Involved in the transfer of Pi from roots to shoots. Involved in abscisic acid (ABA) induction of stomatal closure and ABA repression of stomatal opening. This is Phosphate transporter PHO1 from Arabidopsis thaliana (Mouse-ear cress).